The primary structure comprises 95 residues: Mammaglobin-B (95 aa).

Residues 1 to 18 form the signal peptide; it reads MKLLMVLMLAALLLHCYA. The N-linked (GlcNAc...) asparagine glycan is linked to asparagine 68.

As to quaternary structure, heterodimer of a lipophilin A and a lipophilin C (mammaglobin B) monomer associated head to head. In terms of tissue distribution, expressed in thymus, trachea, kidney, steroid responsive tissues (prostate, testis, uterus, breast and ovary) and salivary gland.

It localises to the secreted. In terms of biological role, may bind androgens and other steroids, may also bind estramustine, a chemotherapeutic agent used for prostate cancer. May be under transcriptional regulation of steroid hormones. This Homo sapiens (Human) protein is Mammaglobin-B (SCGB2A1).